Consider the following 184-residue polypeptide: Alpha-tubulin N-acetyltransferase (184 aa).

One can recognise an N-acetyltransferase domain in the interval 1–174; it reads MDTHGEKMKN…NNFVIFAEYF (174 aa). Acetyl-CoA is bound by residues 108–121 and 144–153; these read FYIR…GLGL and SHKLRSFLKK.

It belongs to the acetyltransferase ATAT1 family.

It carries out the reaction L-lysyl-[alpha-tubulin] + acetyl-CoA = N(6)-acetyl-L-lysyl-[alpha-tubulin] + CoA + H(+). In terms of biological role, specifically acetylates 'Lys-40' in alpha-tubulin on the lumenal side of microtubules. Promotes microtubule destabilization and accelerates microtubule dynamics; this activity may be independent of acetylation activity. Acetylates alpha-tubulin with a slow enzymatic rate, due to a catalytic site that is not optimized for acetyl transfer. Enters the microtubule through each end and diffuses quickly throughout the lumen of microtubules. Acetylates only long/old microtubules because of its slow acetylation rate since it does not have time to act on dynamically unstable microtubules before the enzyme is released. This chain is Alpha-tubulin N-acetyltransferase, found in Plasmodium vivax (strain Salvador I).